The chain runs to 517 residues: UDP-N-acetylmuramoylalanine--D-glutamate ligase (517 aa).

143–149 is a binding site for ATP; the sequence is GTNGKTT.

The protein belongs to the MurCDEF family.

It is found in the cytoplasm. It catalyses the reaction UDP-N-acetyl-alpha-D-muramoyl-L-alanine + D-glutamate + ATP = UDP-N-acetyl-alpha-D-muramoyl-L-alanyl-D-glutamate + ADP + phosphate + H(+). It functions in the pathway cell wall biogenesis; peptidoglycan biosynthesis. Its function is as follows. Cell wall formation. Catalyzes the addition of glutamate to the nucleotide precursor UDP-N-acetylmuramoyl-L-alanine (UMA). The polypeptide is UDP-N-acetylmuramoylalanine--D-glutamate ligase (Leifsonia xyli subsp. xyli (strain CTCB07)).